The chain runs to 202 residues: Putative 3-methyladenine DNA glycosylase (202 aa).

This sequence belongs to the DNA glycosylase MPG family.

This Alkaliphilus oremlandii (strain OhILAs) (Clostridium oremlandii (strain OhILAs)) protein is Putative 3-methyladenine DNA glycosylase.